Consider the following 211-residue polypeptide: Protein-L-isoaspartate O-methyltransferase (211 aa).

The active site involves Ser-62.

The protein belongs to the methyltransferase superfamily. L-isoaspartyl/D-aspartyl protein methyltransferase family.

Its subcellular location is the cytoplasm. It carries out the reaction [protein]-L-isoaspartate + S-adenosyl-L-methionine = [protein]-L-isoaspartate alpha-methyl ester + S-adenosyl-L-homocysteine. In terms of biological role, catalyzes the methyl esterification of L-isoaspartyl residues in peptides and proteins that result from spontaneous decomposition of normal L-aspartyl and L-asparaginyl residues. It plays a role in the repair and/or degradation of damaged proteins. In Shewanella baltica (strain OS223), this protein is Protein-L-isoaspartate O-methyltransferase.